The chain runs to 241 residues: Meiotically up-regulated gene 130 protein (241 aa).

It is found in the mitochondrion. Has a role in meiosis. The chain is Meiotically up-regulated gene 130 protein (mug130) from Schizosaccharomyces pombe (strain 972 / ATCC 24843) (Fission yeast).